Reading from the N-terminus, the 158-residue chain is 6,7-dimethyl-8-ribityllumazine synthase (158 aa).

5-amino-6-(D-ribitylamino)uracil is bound by residues phenylalanine 23, serine 61–glutamate 63, and alanine 85–isoleucine 87. Glutamate 90 to threonine 91 serves as a coordination point for (2S)-2-hydroxy-3-oxobutyl phosphate. The Proton donor role is filled by histidine 93. 5-amino-6-(D-ribitylamino)uracil is bound at residue phenylalanine 118. Arginine 132 is a binding site for (2S)-2-hydroxy-3-oxobutyl phosphate.

It belongs to the DMRL synthase family.

The enzyme catalyses (2S)-2-hydroxy-3-oxobutyl phosphate + 5-amino-6-(D-ribitylamino)uracil = 6,7-dimethyl-8-(1-D-ribityl)lumazine + phosphate + 2 H2O + H(+). It functions in the pathway cofactor biosynthesis; riboflavin biosynthesis; riboflavin from 2-hydroxy-3-oxobutyl phosphate and 5-amino-6-(D-ribitylamino)uracil: step 1/2. Its function is as follows. Catalyzes the formation of 6,7-dimethyl-8-ribityllumazine by condensation of 5-amino-6-(D-ribitylamino)uracil with 3,4-dihydroxy-2-butanone 4-phosphate. This is the penultimate step in the biosynthesis of riboflavin. This Prochlorococcus marinus (strain MIT 9515) protein is 6,7-dimethyl-8-ribityllumazine synthase.